The primary structure comprises 580 residues: Opioid growth factor receptor (580 aa).

Position 1 is an N-acetylmethionine (methionine 1). The span at 1–38 shows a compositional bias: acidic residues; it reads MDDPDCDSTWEEESEEDGEDGQADDTTDEDTGDDDGDA. Disordered stretches follow at residues 1–44 and 285–390; these read MDDP…ARPS and FKPQ…VSEV. Residues 257-286 carry the Bipartite nuclear localization signal motif; the sequence is RRELVYFAWEHFKPRREFVWGPRDKLRRFK. Residues 300–310 show a composition bias toward basic and acidic residues; that stretch reads ADKDEGSRDPS. Serine 327, serine 361, serine 365, and serine 403 each carry phosphoserine. The segment covering 352 to 374 has biased composition (basic and acidic residues); that stretch reads NQRDEAKSLSPKESKKRKLEGNR. Positions 405–580 are disordered; the sequence is ISQEPREAEP…IEASAEPPKP (176 aa). 8 consecutive repeat copies span residues 467-475, 476-484, 485-493, 494-502, 503-511, 512-520, 521-529, and 530-538. Positions 467-538 are 8 X approximate tandem repeats; sequence GPEDSNSQVG…VGPEDPNSQV (72 aa). Residues 489-538 show a composition bias toward polar residues; it reads PNSQVGLEDPNSQVGPEDPNSQVGPEDPNSQVGPEDPNSQVGPEDPNSQV. A phosphoserine mark is found at serine 548 and serine 555.

This sequence belongs to the opioid growth factor receptor family. In terms of tissue distribution, highly expressed in 6-day old cerebellum and brain. Lower expressed in adult cerebellum. The protein is detected in germinal cells of the cerebellum, in neurons of the deep cerebellar nuclei and in the glia in the medullary layer.

It is found in the cytoplasm. Its subcellular location is the perinuclear region. The protein resides in the nucleus. In terms of biological role, receptor for opioid growth factor (OGF), also known as Met-enkephalin. Seems to be involved in growth regulation. This chain is Opioid growth factor receptor (Ogfr), found in Rattus norvegicus (Rat).